The following is a 691-amino-acid chain: Calcium-binding and coiled-coil domain-containing protein 1 (691 aa).

A p300 KIX-binding region spans residues 1–30 (MEESPLSRAPSRGGVNFLNVARTYIPNTKV). The tract at residues 1 to 190 (MEESPLSRAP…VQELERALAT (190 aa)) is N-terminal AD (CTNNB1 binding site). A Phosphoserine modification is found at S4. An interaction with GATA1 region spans residues 45–125 (SDWIGIFKVE…FQFREPRPMD (81 aa)). 3 coiled-coil regions span residues 145-205 (KATV…YKGI), 232-339 (ELED…AELE), and 417-514 (QSVE…ADEK). Residues 501–691 (RKLEARLEKV…FSTQDPFTFE (191 aa)) are C-terminal AD (CTNNB1 binding site); interaction with CCAR1. The segment at 514–606 (KWNEDATTED…SEAEDEKSVL (93 aa)) is disordered. A UBZ1-type zinc finger spans residues 653 to 679 (WKECPICKERFPAESDKDALEDHMDGH). The Zn(2+) site is built by C656, C659, H675, and H679.

It belongs to the CALCOCO family. In terms of assembly, part of a calphoglin complex consisting of CALCOCO1, PPA1 and PGM. Interacts with the bHLH-PAS domains of GRIP1, AHR and ARNT. Interacts with CTNNB1 via both its N- and C-terminal regions. Interacts with EP300. Interacts with CCAR1 (via N-terminus) and GATA1.

Its subcellular location is the cytoplasm. The protein localises to the nucleus. Functionally, functions as a coactivator for aryl hydrocarbon and nuclear receptors (NR). Recruited to promoters through its contact with the N-terminal basic helix-loop-helix-Per-Arnt-Sim (PAS) domain of transcription factors or coactivators, such as NCOA2. During ER-activation acts synergistically in combination with other NCOA2-binding proteins, such as EP300, CREBBP and CARM1. Involved in the transcriptional activation of target genes in the Wnt/CTNNB1 pathway. Functions as a secondary coactivator in LEF1-mediated transcriptional activation via its interaction with CTNNB1. Coactivator function for nuclear receptors and LEF1/CTNNB1 involves differential utilization of two different activation regions. In association with CCAR1 enhances GATA1- and MED1-mediated transcriptional activation from the gamma-globin promoter during erythroid differentiation of K562 erythroleukemia cells. In terms of biological role, seems to enhance inorganic pyrophosphatase thus activating phosphogluomutase (PMG). Probably functions as a component of the calphoglin complex, which is involved in linking cellular metabolism (phosphate and glucose metabolism) with other core functions including protein synthesis and degradation, calcium signaling and cell growth. The protein is Calcium-binding and coiled-coil domain-containing protein 1 (CALCOCO1) of Homo sapiens (Human).